The following is an 87-amino-acid chain: U3-theraphotoxin-Hhn1o (87 aa).

The first 24 residues, 1–24 (MVNMKASMFLTFAGLVLLFVVCYA), serve as a signal peptide directing secretion. Residues 25–52 (SESEEKEFPKEMLSSIFAVDNDFKQEER) constitute a propeptide that is removed on maturation. Intrachain disulfides connect cysteine 54–cysteine 67 and cysteine 61–cysteine 72.

It belongs to the neurotoxin 10 (Hwtx-1) family. 51 (Hntx-8) subfamily. Hntx-8 sub-subfamily. In terms of tissue distribution, expressed by the venom gland.

The protein localises to the secreted. Ion channel inhibitor. This is U3-theraphotoxin-Hhn1o from Cyriopagopus hainanus (Chinese bird spider).